The primary structure comprises 167 residues: MATNQFANRTRQTLAWITTCGERVRSWYEDYRFGSIDENAQLGRRGEQAAAQLLRRKGLNVIAESESDRAGEIDLIALRKRPRLIVFVEVKTLSTTRPGHPADRVDENKQARITRAALRYLKRKKLLGITCRFDVVAVWWPRDEPRPTRVEHYESAFNAVGVDSFYG.

It belongs to the UPF0102 family.

The polypeptide is UPF0102 protein RB9115 (Rhodopirellula baltica (strain DSM 10527 / NCIMB 13988 / SH1)).